Reading from the N-terminus, the 80-residue chain is Exodeoxyribonuclease 7 small subunit (80 aa).

It belongs to the XseB family. As to quaternary structure, heterooligomer composed of large and small subunits.

The protein resides in the cytoplasm. The enzyme catalyses Exonucleolytic cleavage in either 5'- to 3'- or 3'- to 5'-direction to yield nucleoside 5'-phosphates.. In terms of biological role, bidirectionally degrades single-stranded DNA into large acid-insoluble oligonucleotides, which are then degraded further into small acid-soluble oligonucleotides. This chain is Exodeoxyribonuclease 7 small subunit, found in Escherichia coli O6:K15:H31 (strain 536 / UPEC).